We begin with the raw amino-acid sequence, 530 residues long: UPF0422 protein lpg2959 (530 aa).

The signal sequence occupies residues 1 to 19 (MKFKKIILALACLSSPLYA). Residues 20–66 (DQDQQLKSEIQRLQHQAEDLQAQLNRLQKQLANHKSSQQKHEQQAAA) adopt a coiled-coil conformation. The segment at 50–81 (LANHKSSQQKHEQQAAAKPAEPQSKPTVKSGA) is disordered. Residues 63 to 75 (QAAAKPAEPQSKP) are compositionally biased toward low complexity.

The protein belongs to the UPF0422 family.

The sequence is that of UPF0422 protein lpg2959 from Legionella pneumophila subsp. pneumophila (strain Philadelphia 1 / ATCC 33152 / DSM 7513).